The sequence spans 422 residues: Synaptotagmin-1 (422 aa).

At 1-57 (MVSESHHEALAAPPVTTVATVLPSNATEPASPGEGKEDAFSKLKEKFMNELHKIPLP) the chain is on the vesicular side. Asparagine 25 carries an N-linked (GlcNAc...) asparagine glycan. The chain crosses the membrane as a helical span at residues 58-80 (PWALIAIAIVAVLLVLTCCFCIC). 5 S-palmitoyl cysteine lipidation sites follow: cysteine 75, cysteine 76, cysteine 78, cysteine 80, and cysteine 83. Topologically, residues 81-422 (KKCLFKKKNK…EVDAMLAVKK (342 aa)) are cytoplasmic. A disordered region spans residues 113–142 (TMKDQALKDDDAETGLTDGEEKEEPKEEEK). The span at 122–134 (DDAETGLTDGEEK) shows a compositional bias: acidic residues. Threonine 129 bears the Phosphothreonine mark. The segment at 136–382 (EPKEEEKLGK…AIGKVFVGYN (247 aa)) is phospholipid binding. The 120-residue stretch at 142 to 261 (KLGKLQYSLD…DFGHVTEEWR (120 aa)) folds into the C2 1 domain. 3 residues coordinate Ca(2+): leucine 172, aspartate 173, and aspartate 179. Tyrosine 230 is subject to Phosphotyrosine. Positions 231, 232, 233, 236, 237, and 239 each coordinate Ca(2+). Serine 265 bears the Phosphoserine mark. The C2 2 domain maps to 273–406 (KLGDICFSLR…NPRRPIAQWH (134 aa)). Residues aspartate 304 and aspartate 310 each coordinate Ca(2+). 2 positions are modified to phosphoserine: serine 343 and serine 345. Ca(2+) contacts are provided by aspartate 364, aspartate 366, and aspartate 372.

It belongs to the synaptotagmin family. Homotetramer. Heterodimer; heterodimerizes with SYT2 in presence of calcium. Interacts with SCAMP5. Interacts with STON2. Forms a complex with SV2B, syntaxin 1 and SNAP25. Interacts with SV2A, SV2B and SV2C. Interacts with RIMS1. Interacts with PRRT2. Interacts with DNAJC5 in a phosphorylation-dependent manner. Interacts (via N-terminus) with RAB3A. Interacts with SYT12. Interacts with calmodulin. Interacts with DNM1 (via C-terminal proline-rich domain (PRD)); this interaction facilitates vesicle fission during clathrin-mediated endocytosis (CME). Ca(2+) is required as a cofactor. Glycosylated. Expressed in melanocytes.

Its subcellular location is the cytoplasmic vesicle. It is found in the secretory vesicle membrane. The protein resides in the secretory vesicle. It localises to the synaptic vesicle membrane. The protein localises to the chromaffin granule membrane. Its subcellular location is the cytoplasm. Functionally, calcium sensor that participates in triggering neurotransmitter release at the synapse. May have a regulatory role in the membrane interactions during trafficking of synaptic vesicles at the active zone of the synapse. It binds acidic phospholipids with a specificity that requires the presence of both an acidic head group and a diacyl backbone. A Ca(2+)-dependent interaction between synaptotagmin and putative receptors for activated protein kinase C has also been reported. It can bind to at least three additional proteins in a Ca(2+)-independent manner; these are neurexins, syntaxin and AP2. Plays a role in dendrite formation by melanocytes. The protein is Synaptotagmin-1 of Homo sapiens (Human).